Reading from the N-terminus, the 345-residue chain is Phosphoribosylformylglycinamidine cyclo-ligase (345 aa).

This sequence belongs to the AIR synthase family.

It localises to the cytoplasm. The enzyme catalyses 2-formamido-N(1)-(5-O-phospho-beta-D-ribosyl)acetamidine + ATP = 5-amino-1-(5-phospho-beta-D-ribosyl)imidazole + ADP + phosphate + H(+). It functions in the pathway purine metabolism; IMP biosynthesis via de novo pathway; 5-amino-1-(5-phospho-D-ribosyl)imidazole from N(2)-formyl-N(1)-(5-phospho-D-ribosyl)glycinamide: step 2/2. The polypeptide is Phosphoribosylformylglycinamidine cyclo-ligase (Escherichia coli O7:K1 (strain IAI39 / ExPEC)).